The primary structure comprises 238 residues: Phosphoribosylaminoimidazole-succinocarboxamide synthase (238 aa).

This sequence belongs to the SAICAR synthetase family.

The enzyme catalyses 5-amino-1-(5-phospho-D-ribosyl)imidazole-4-carboxylate + L-aspartate + ATP = (2S)-2-[5-amino-1-(5-phospho-beta-D-ribosyl)imidazole-4-carboxamido]succinate + ADP + phosphate + 2 H(+). It functions in the pathway purine metabolism; IMP biosynthesis via de novo pathway; 5-amino-1-(5-phospho-D-ribosyl)imidazole-4-carboxamide from 5-amino-1-(5-phospho-D-ribosyl)imidazole-4-carboxylate: step 1/2. This Desulfitobacterium hafniense (strain Y51) protein is Phosphoribosylaminoimidazole-succinocarboxamide synthase.